A 250-amino-acid chain; its full sequence is MLLIAGLGNPGPQYAHNRHNIGFMAADEIFRRHRFSNWQKKFQAEIADGVIDGEKVLLVKPQTFMNLSGQSIGEAMRFYKLTPADLVVIYDELDLVPGKLRIKTGGGPGGHNGIKSIDAHMQSFPGGQNYRRMRLGIGHPGAKELVHNYVLGDFAKADNEWLDTLMGAVADNVAMLARREDNSFMNRIALAMGDGNQRPGGVKTDPAQLEKAPPKAQSHIRQARQNQKKPNIPESGPMAEMLKKLLGKKD.

Residue Tyr-14 coordinates tRNA. His-19 functions as the Proton acceptor in the catalytic mechanism. Positions 64, 66, and 112 each coordinate tRNA. The disordered stretch occupies residues 192–250 (MGDGNQRPGGVKTDPAQLEKAPPKAQSHIRQARQNQKKPNIPESGPMAEMLKKLLGKKD). Positions 219–229 (HIRQARQNQKK) are enriched in polar residues. Positions 241–250 (MLKKLLGKKD) are enriched in basic and acidic residues.

It belongs to the PTH family. In terms of assembly, monomer.

It is found in the cytoplasm. The catalysed reaction is an N-acyl-L-alpha-aminoacyl-tRNA + H2O = an N-acyl-L-amino acid + a tRNA + H(+). In terms of biological role, hydrolyzes ribosome-free peptidyl-tRNAs (with 1 or more amino acids incorporated), which drop off the ribosome during protein synthesis, or as a result of ribosome stalling. Its function is as follows. Catalyzes the release of premature peptidyl moieties from peptidyl-tRNA molecules trapped in stalled 50S ribosomal subunits, and thus maintains levels of free tRNAs and 50S ribosomes. The protein is Peptidyl-tRNA hydrolase of Brucella suis (strain ATCC 23445 / NCTC 10510).